Reading from the N-terminus, the 610-residue chain is Sulfite reductase [NADPH] flavoprotein alpha-component (610 aa).

Residues 68-206 (IIVISASQTG…EVDKWKEKVV (139 aa)) enclose the Flavodoxin-like domain. FMN-binding positions include 74–79 (SQTGNA), 121–124 (STHG), and 157–166 (LGDRSYEYFA). The 217-residue stretch at 243–459 (EFPLIAYLLN…VESNDNFRLP (217 aa)) folds into the FAD-binding FR-type domain. FAD is bound by residues Thr331, Ser365, 397–400 (RFYS), 415–417 (TVS), Tyr421, and 430–433 (GGAS). NADP(+)-binding positions include 530 to 531 (SR), 536 to 540 (KVYVQ), and Asp572. Residue Tyr610 coordinates FAD.

It belongs to the NADPH-dependent sulphite reductase flavoprotein subunit CysJ family. This sequence in the N-terminal section; belongs to the flavodoxin family. In the C-terminal section; belongs to the flavoprotein pyridine nucleotide cytochrome reductase family. As to quaternary structure, alpha(8)-beta(8). The alpha component is a flavoprotein, the beta component is a hemoprotein. The cofactor is FAD. FMN serves as cofactor.

The catalysed reaction is hydrogen sulfide + 3 NADP(+) + 3 H2O = sulfite + 3 NADPH + 4 H(+). Its pathway is sulfur metabolism; hydrogen sulfide biosynthesis; hydrogen sulfide from sulfite (NADPH route): step 1/1. In terms of biological role, component of the sulfite reductase complex that catalyzes the 6-electron reduction of sulfite to sulfide. This is one of several activities required for the biosynthesis of L-cysteine from sulfate. The flavoprotein component catalyzes the electron flow from NADPH -&gt; FAD -&gt; FMN to the hemoprotein component. In Blochmanniella floridana, this protein is Sulfite reductase [NADPH] flavoprotein alpha-component.